Here is a 99-residue protein sequence, read N- to C-terminus: MAHNNYLDLEMLFNECNAQHYENLGMFFKWLQQFAAHHEDPKITIKDFKGDKTSGEMILHVNTFTLFKYRQEFDMKVSALNDNGLGWKILFVDRSLGCN.

This is an uncharacterized protein from Caenorhabditis elegans.